The primary structure comprises 153 residues: Large ribosomal subunit protein uL15 (153 aa).

Positions Met1–Ala42 are disordered. Positions Arg21–Cys31 are enriched in gly residues.

This sequence belongs to the universal ribosomal protein uL15 family. Part of the 50S ribosomal subunit.

Binds to the 23S rRNA. This is Large ribosomal subunit protein uL15 from Nitrosomonas eutropha (strain DSM 101675 / C91 / Nm57).